The chain runs to 515 residues: Serine--tRNA ligase, cytoplasmic (515 aa).

Positions 9–61 (RTDKGGDPEIIRETQRKRFKDVSLVDKLVQADTEWRKCRFTADNLNKAKNLCS) are interaction with tRNA. 2 residues coordinate L-serine: threonine 271 and arginine 302. Residues 302 to 304 (RQE) and 318 to 321 (VHQF) contribute to the ATP site. Glutamate 325 is a binding site for L-serine. 391 to 394 (ELVS) is an ATP binding site. Asparagine 427 is an L-serine binding site. The segment at 475–515 (PIDQETTKKQKKQQEGGKKKKHQGGDADLENKVENMSVNDS) is disordered. Basic and acidic residues predominate over residues 479–507 (ETTKKQKKQQEGGKKKKHQGGDADLENKV). Residues 482–494 (KKQKKQQEGGKKK) carry the Nuclear localization signal motif.

Belongs to the class-II aminoacyl-tRNA synthetase family. Type-1 seryl-tRNA synthetase subfamily.

Its subcellular location is the cytoplasm. The protein localises to the nucleus. The enzyme catalyses tRNA(Ser) + L-serine + ATP = L-seryl-tRNA(Ser) + AMP + diphosphate + H(+). It carries out the reaction tRNA(Sec) + L-serine + ATP = L-seryl-tRNA(Sec) + AMP + diphosphate + H(+). Functionally, catalyzes the attachment of serine to tRNA(Ser) in a two-step reaction: serine is first activated by ATP to form Ser-AMP and then transferred to the acceptor end of tRNA(Ser). Is probably also able to aminoacylate tRNA(Sec) with serine, to form the misacylated tRNA L-seryl-tRNA(Sec), which will be further converted into selenocysteinyl-tRNA(Sec). In the nucleus, binds to the vegfa core promoter and prevents myc binding and transcriptional activation by myc. Thereby inhibits the production of vegfa and sprouting angiogenesis mediated by vegfa. The sequence is that of Serine--tRNA ligase, cytoplasmic (sars1) from Danio rerio (Zebrafish).